A 251-amino-acid chain; its full sequence is 1-(5-phosphoribosyl)-5-[(5-phosphoribosylamino)methylideneamino] imidazole-4-carboxamide isomerase (251 aa).

Asp8 acts as the Proton acceptor in catalysis. Asp131 acts as the Proton donor in catalysis.

Belongs to the HisA/HisF family.

It is found in the cytoplasm. It carries out the reaction 1-(5-phospho-beta-D-ribosyl)-5-[(5-phospho-beta-D-ribosylamino)methylideneamino]imidazole-4-carboxamide = 5-[(5-phospho-1-deoxy-D-ribulos-1-ylimino)methylamino]-1-(5-phospho-beta-D-ribosyl)imidazole-4-carboxamide. It functions in the pathway amino-acid biosynthesis; L-histidine biosynthesis; L-histidine from 5-phospho-alpha-D-ribose 1-diphosphate: step 4/9. The chain is 1-(5-phosphoribosyl)-5-[(5-phosphoribosylamino)methylideneamino] imidazole-4-carboxamide isomerase from Burkholderia vietnamiensis (strain G4 / LMG 22486) (Burkholderia cepacia (strain R1808)).